We begin with the raw amino-acid sequence, 114 residues long: Protachykinin (114 aa).

The N-terminal stretch at 1 to 19 (MKFLLPSIVIFLVLCQVFG) is a signal peptide. Residues 20–55 (EELGPKEDLDYWTGSNQVQDEWLQADPFREIIRRMT) constitute a propeptide that is removed on maturation. Met67 and Met91 each carry methionine amide.

Belongs to the tachykinin family. As to expression, expressed in all parts of the brain, with robust expression in the olfactory bulbs and tracts, moderate expression in the hypothalamus and posterior brain, and weak expression in the telencephalon-preoptic region and optic tectum-thalamus. Also expressed in nerve fibers, intestine, testes and pituitary gland. Not expressed in the liver or kidneys.

It is found in the secreted. Tachykinins are active peptides which excite neurons, evoke behavioral responses, are potent vasodilators and secretagogues, and contract (directly or indirectly) many smooth muscles. Its function is as follows. Substance P produces a voltage-dependent inhibition of calcium current in retinal bipolar cells. It can enhance learning and memory, may regulate social approach and feeding behaviors, and can accelerate the functional recovery in postural balance in response to light after unilateral labyrinthectomy. The polypeptide is Protachykinin (Carassius auratus (Goldfish)).